A 102-amino-acid polypeptide reads, in one-letter code: Small ribosomal subunit protein uS10 (102 aa).

This sequence belongs to the universal ribosomal protein uS10 family. Part of the 30S ribosomal subunit.

In terms of biological role, involved in the binding of tRNA to the ribosomes. This Methanospirillum hungatei JF-1 (strain ATCC 27890 / DSM 864 / NBRC 100397 / JF-1) protein is Small ribosomal subunit protein uS10.